The sequence spans 405 residues: Cytoplasmic polyadenylated homeobox-like protein (405 aa).

2 disordered regions span residues 1–33 (MNLDGTSGGFPAEEDHHNEERQTKNKRKTKHRH) and 340–363 (PWDLGKQWSSAQSQLQSQLPQNNG). Residues 13 to 23 (EEDHHNEERQT) show a composition bias toward basic and acidic residues. A compositionally biased stretch (basic residues) spans 24-33 (KNKRKTKHRH). The segment at residues 28–87 (KTKHRHKFSEELLQELKEIFGENCYPDYTTRKTLAIKFDCPVNVIDNWFQNKRARLPPAE) is a DNA-binding region (homeobox). A compositionally biased stretch (low complexity) spans 346 to 360 (QWSSAQSQLQSQLPQ).

Its subcellular location is the nucleus. In terms of biological role, transcription factor that acts as activator. This Homo sapiens (Human) protein is Cytoplasmic polyadenylated homeobox-like protein.